The primary structure comprises 253 residues: 5'-nucleotidase SurE (253 aa).

The a divalent metal cation site is built by Asp8, Asp9, Ser39, and Asn92.

The protein belongs to the SurE nucleotidase family. A divalent metal cation serves as cofactor.

The protein resides in the cytoplasm. It carries out the reaction a ribonucleoside 5'-phosphate + H2O = a ribonucleoside + phosphate. Functionally, nucleotidase that shows phosphatase activity on nucleoside 5'-monophosphates. This chain is 5'-nucleotidase SurE, found in Burkholderia pseudomallei (strain 1710b).